We begin with the raw amino-acid sequence, 146 residues long: Hemoglobin subunit beta (146 aa).

Val1 is modified (N-acetylvaline). In terms of domain architecture, Globin spans 2-146 (HMTDAEKKLV…VANALAHKYH (145 aa)). Thr12 carries the phosphothreonine modification. Residue Lys59 is modified to N6-acetyllysine. His63 is a binding site for heme b. Residue Lys82 is modified to N6-acetyllysine. His92 provides a ligand contact to heme b. Cys93 carries the S-nitrosocysteine modification. An N6-acetyllysine modification is found at Lys144.

This sequence belongs to the globin family. As to quaternary structure, tetramer of two alpha and two different beta chains. Two external cysteine residues at beta-16 and beta-52 cause reversible polymerization to octamers and most likely irreversible formation of higher polymers. In terms of tissue distribution, red blood cells.

Functionally, involved in oxygen transport from the lung to the various peripheral tissues. This Echinops telfairi (Lesser hedgehog tenrec) protein is Hemoglobin subunit beta (HBB).